A 209-amino-acid chain; its full sequence is Transcriptional activator FHA1 (209 aa).

The FHA domain occupies isoleucine 30–histidine 87. Residues tyrosine 157 to glycine 171 are compositionally biased toward acidic residues. Residues tyrosine 157–glutamine 209 are disordered. Gly residues predominate over residues alanine 183–glycine 196. Positions lysine 200–glutamine 209 are enriched in polar residues.

As to expression, expressed in roots, stems, leaves, young flower buds and open flowers.

It localises to the nucleus. Functionally, transcription regulator that may be involved in the control of the pre-rRNA processing machinery. Can rescue the phenotypes of slow growth and defective rRNA processing in the yeast fhl1 null mutant. Shows transactivation activity in yeast. This is Transcriptional activator FHA1 from Nicotiana tabacum (Common tobacco).